The sequence spans 652 residues: MLDPLRASSPATLALMSSLPLPLDHGHLQKLVTADLVRPDHLLGAHPVTENGVEGVRFAVWAPRAQHVSVVGDFNGWNGFDHPMQRLDFGFWGAFVPSARPGQRYKFRVTGADGRTVDKMDPYGAFTEVRPNTASIIWPLAFEWTDDAWMQKRTPGFDRPISIYEVHVGSWARRDDGWFLNYRELAHRLADYVTFMGYTHVELLGVMEHPFDGSWGYQVTGYYAPTSRLGAPEDFAYLVNHLHERGIGVIVDWVPGHFPTDEAGLAHFDGAPLYEYSDPRKGYHYDWNTYIFDYGRNEVMMFLIGSALKWLQDFHVDGLRVDAVASMLYLDFSRTEWVPNIHGGRENLEAIAFLKRLNEVVHHMAPGCMMIAEESTAFPGVTSPTPFGLGFDYKWAMGWMNDTLYYFEQDPLWRKYHHHKLTFFNVYRTGENYILAISHDEVVHLKKAMVSKMPGDWYMQRAGYRAFLAMMWTTPGKKLLFMGQEFAQGTEWNHDEALPWDVTDLPEHRGVMNLVRRLNGLYRERPDLHIGDTWEEGQLWVSADDTDNSVYAYIRRDPRPQAEGGGAWSLAVANLTPVYREGYPIGVPQGGEYRVLLSTDDGEYGGFGTQQPDLTAKEEGWNGQTHHLRLNLPPMSVLLLEHVGVTPRSEDR.

D322 functions as the Nucleophile in the catalytic mechanism. E373 acts as the Proton donor in catalysis.

It belongs to the glycosyl hydrolase 13 family. GlgB subfamily. In terms of assembly, monomer.

The catalysed reaction is Transfers a segment of a (1-&gt;4)-alpha-D-glucan chain to a primary hydroxy group in a similar glucan chain.. Its pathway is glycan biosynthesis; glycogen biosynthesis. In terms of biological role, catalyzes the formation of the alpha-1,6-glucosidic linkages in glycogen by scission of a 1,4-alpha-linked oligosaccharide from growing alpha-1,4-glucan chains and the subsequent attachment of the oligosaccharide to the alpha-1,6 position. This Deinococcus geothermalis (strain DSM 11300 / CIP 105573 / AG-3a) protein is 1,4-alpha-glucan branching enzyme GlgB.